Here is a 269-residue protein sequence, read N- to C-terminus: Shikimate dehydrogenase (NADP(+)) (269 aa).

Shikimate contacts are provided by residues Ser17 to Ser19 and Thr64. Catalysis depends on Lys68, which acts as the Proton acceptor. An NADP(+)-binding site is contributed by Glu80. Residues Asn89 and Asp105 each contribute to the shikimate site. Residues Gly130–Ala134, Asn154–Lys159, and Met213 contribute to the NADP(+) site. Tyr215 is a shikimate binding site. Gly237 serves as a coordination point for NADP(+).

It belongs to the shikimate dehydrogenase family. In terms of assembly, homodimer.

The enzyme catalyses shikimate + NADP(+) = 3-dehydroshikimate + NADPH + H(+). It participates in metabolic intermediate biosynthesis; chorismate biosynthesis; chorismate from D-erythrose 4-phosphate and phosphoenolpyruvate: step 4/7. Involved in the biosynthesis of the chorismate, which leads to the biosynthesis of aromatic amino acids. Catalyzes the reversible NADPH linked reduction of 3-dehydroshikimate (DHSA) to yield shikimate (SA). The protein is Shikimate dehydrogenase (NADP(+)) of Neisseria meningitidis serogroup C / serotype 2a (strain ATCC 700532 / DSM 15464 / FAM18).